A 451-amino-acid polypeptide reads, in one-letter code: Histidinol dehydrogenase (451 aa).

A disordered region spans residues 1–20; sequence MLNVTDLRGHTPSKSDIRRA. The segment covering 7–19 has biased composition (basic and acidic residues); the sequence is LRGHTPSKSDIRR. Residues Tyr-129, Gln-193, and Asn-218 each coordinate NAD(+). Substrate-binding residues include Thr-241, Gln-263, and His-266. 2 residues coordinate Zn(2+): Gln-263 and His-266. Residues Glu-332 and His-333 each act as proton acceptor in the active site. Substrate-binding residues include His-333, Asp-366, Glu-420, and His-425. Asp-366 serves as a coordination point for Zn(2+). His-425 is a binding site for Zn(2+).

Belongs to the histidinol dehydrogenase family. Requires Zn(2+) as cofactor.

It carries out the reaction L-histidinol + 2 NAD(+) + H2O = L-histidine + 2 NADH + 3 H(+). Its pathway is amino-acid biosynthesis; L-histidine biosynthesis; L-histidine from 5-phospho-alpha-D-ribose 1-diphosphate: step 9/9. In terms of biological role, catalyzes the sequential NAD-dependent oxidations of L-histidinol to L-histidinaldehyde and then to L-histidine. The sequence is that of Histidinol dehydrogenase from Corynebacterium efficiens (strain DSM 44549 / YS-314 / AJ 12310 / JCM 11189 / NBRC 100395).